The sequence spans 321 residues: Sporulation protein cse15 (321 aa).

2 coiled-coil regions span residues 37–70 (FHQK…TKEK) and 108–205 (IEEK…KEKL). Composition is skewed to basic and acidic residues over residues 234 to 243 (GTKQKEKTEE) and 282 to 293 (AKSHTIEELKNR). Disordered regions lie at residues 234–253 (GTKQ…AQPN) and 274–293 (AHAQ…LKNR).

The polypeptide is Sporulation protein cse15 (cse15) (Bacillus subtilis (strain 168)).